The chain runs to 203 residues: Superoxide dismutase [Mn] (203 aa).

The Mn(2+) site is built by H31, H79, D161, and H165.

Belongs to the iron/manganese superoxide dismutase family. It depends on Mn(2+) as a cofactor.

The catalysed reaction is 2 superoxide + 2 H(+) = H2O2 + O2. Functionally, destroys superoxide anion radicals which are normally produced within the cells and which are toxic to biological systems. The polypeptide is Superoxide dismutase [Mn] (sod) (Haloarcula marismortui (strain ATCC 43049 / DSM 3752 / JCM 8966 / VKM B-1809) (Halobacterium marismortui)).